The primary structure comprises 471 residues: tRNA-2-methylthio-N(6)-dimethylallyladenosine synthase (471 aa).

An MTTase N-terminal domain is found at 29–146 (KKFHIKTYGC…LPELIAKVNR (118 aa)). [4Fe-4S] cluster contacts are provided by Cys-38, Cys-74, Cys-109, Cys-187, Cys-191, and Cys-194. The region spanning 173–405 (RVPQSSAFLS…QQLLKEKQLE (233 aa)) is the Radical SAM core domain. One can recognise a TRAM domain in the interval 408-467 (KKMIGKTVTVLFDKKHPDKISGRTEYMQQVFSDDSNLLDKIVTMRVEDASTFTLKCTAED).

This sequence belongs to the methylthiotransferase family. MiaB subfamily. In terms of assembly, monomer. [4Fe-4S] cluster is required as a cofactor.

It localises to the cytoplasm. The enzyme catalyses N(6)-dimethylallyladenosine(37) in tRNA + (sulfur carrier)-SH + AH2 + 2 S-adenosyl-L-methionine = 2-methylsulfanyl-N(6)-dimethylallyladenosine(37) in tRNA + (sulfur carrier)-H + 5'-deoxyadenosine + L-methionine + A + S-adenosyl-L-homocysteine + 2 H(+). Catalyzes the methylthiolation of N6-(dimethylallyl)adenosine (i(6)A), leading to the formation of 2-methylthio-N6-(dimethylallyl)adenosine (ms(2)i(6)A) at position 37 in tRNAs that read codons beginning with uridine. The protein is tRNA-2-methylthio-N(6)-dimethylallyladenosine synthase of Neorickettsia sennetsu (strain ATCC VR-367 / Miyayama) (Ehrlichia sennetsu).